We begin with the raw amino-acid sequence, 214 residues long: Ependymin (214 aa).

A signal peptide spans 1–20 (MHTVKLLCVVFSCLCAVAWA). N-linked (GlcNAc...) asparagine glycans are attached at residues Asn-70 and Asn-93.

It belongs to the ependymin family. Forms disulfide-linked dimers. In terms of processing, binds calcium through the terminal sialic acids.

The protein localises to the secreted. In terms of biological role, may play a role in neural plasticity. May be involved during axon regeneration. The polypeptide is Ependymin (epd) (Notemigonus crysoleucas (Golden shiner)).